The sequence spans 86 residues: UPF0473 protein Clos_1662 (86 aa).

It belongs to the UPF0473 family.

The chain is UPF0473 protein Clos_1662 from Alkaliphilus oremlandii (strain OhILAs) (Clostridium oremlandii (strain OhILAs)).